The chain runs to 699 residues: Elongation factor G (699 aa).

Residues 8-288 enclose the tr-type G domain; that stretch reads EDYRNFGIMA…AVVDYLPSPL (281 aa). GTP is bound by residues 17–24, 86–90, and 140–143; these read AHIDAGKT, DTPGH, and NKMD.

The protein belongs to the TRAFAC class translation factor GTPase superfamily. Classic translation factor GTPase family. EF-G/EF-2 subfamily.

It is found in the cytoplasm. In terms of biological role, catalyzes the GTP-dependent ribosomal translocation step during translation elongation. During this step, the ribosome changes from the pre-translocational (PRE) to the post-translocational (POST) state as the newly formed A-site-bound peptidyl-tRNA and P-site-bound deacylated tRNA move to the P and E sites, respectively. Catalyzes the coordinated movement of the two tRNA molecules, the mRNA and conformational changes in the ribosome. The polypeptide is Elongation factor G (Rhizobium etli (strain ATCC 51251 / DSM 11541 / JCM 21823 / NBRC 15573 / CFN 42)).